Reading from the N-terminus, the 239-residue chain is Octanoyltransferase (239 aa).

A BPL/LPL catalytic domain is found at 48–236 (EGGDELVWLV…AFETVFGETT (189 aa)). Substrate-binding positions include 87 to 94 (RGGEYTYH), 167 to 169 (ALG), and 180 to 182 (GLS). Cys-198 functions as the Acyl-thioester intermediate in the catalytic mechanism.

It belongs to the LipB family.

It localises to the cytoplasm. The catalysed reaction is octanoyl-[ACP] + L-lysyl-[protein] = N(6)-octanoyl-L-lysyl-[protein] + holo-[ACP] + H(+). The protein operates within protein modification; protein lipoylation via endogenous pathway; protein N(6)-(lipoyl)lysine from octanoyl-[acyl-carrier-protein]: step 1/2. Catalyzes the transfer of endogenously produced octanoic acid from octanoyl-acyl-carrier-protein onto the lipoyl domains of lipoate-dependent enzymes. Lipoyl-ACP can also act as a substrate although octanoyl-ACP is likely to be the physiological substrate. This is Octanoyltransferase from Rhizobium etli (strain ATCC 51251 / DSM 11541 / JCM 21823 / NBRC 15573 / CFN 42).